A 460-amino-acid polypeptide reads, in one-letter code: MKKLAKMISVATLGACAFQAHALDGKLVPDQGILVSVGQDVDSVNDYSSAMGTTPAGVTNYVGIVNLDGLSTDADAGAGRNNIVELANQYPTSALIVGVSMNGEVQNVANGQYNANIDTLIRTLGEFDRPVYLRWAYEVDGPWNGHNTEDLKQSFRHVYQRIRELGYADNISMVWQVASYCPTAPGQLGTWWPGDDVVDWVGLSYFAPQDCNWDRVNEAAQWARSHNKPLFINESSPQRYQLADLTYSTDPAKGTNRQAKTDQQIWSEWFEPFFQFMVDNQDILKGFTYINADWDSQWRWAAPYNEGYWGDSRVQVIPYIKQKWQETLSDPKFIRHSDELFAQLGYGNSDGGNGGDNGGDNGGDNGGETPENCTDDFNFNYVSDNEIEVYHVDKGWSAGWNYLCLDDYCLSGTKSNGAFSRSFSAQLGQTYKMTFKVEDITGQGQQIIDKTVTFTNQVCN.

The first 22 residues, 1–22, serve as a signal peptide directing secretion; it reads MKKLAKMISVATLGACAFQAHA. Residues 23-337 form the GH26 domain; it reads LDGKLVPDQG…LSDPKFIRHS (315 aa). Glu138 serves as the catalytic Proton donor. Glu234 functions as the Nucleophile in the catalytic mechanism. The disordered stretch occupies residues 347–371; sequence GNSDGGNGGDNGGDNGGDNGGETPE. Residues 348 to 366 show a composition bias toward gly residues; sequence NSDGGNGGDNGGDNGGDNG. The tract at residues 368–460 is carbohydrate binding module (CBM); it reads ETPENCTDDF…TVTFTNQVCN (93 aa). 2 disulfide bridges follow: Cys373–Cys459 and Cys404–Cys409.

It belongs to the glycosyl hydrolase 26 family.

The catalysed reaction is Random hydrolysis of (1-&gt;3)-beta-D-glycosidic linkages in (1-&gt;3)-beta-D-xylans.. With respect to regulation, completely inhibited by Cu(2+), Hg(2+) and N-bromosuccinimide. Strongly inhibited by Ag(+), Zn(2+) and Pb(2+). Moderately inhibited by Fe(3+), Al(3+), Mn(2+), dithiothreitol and p-chloromercuribenzoic acid. Slightly activated by Mg(2+) and Ca(2+). Unaffected by Na(+), K(+), Ba(2+), EDTA, iodoacetic acid and N-ethylmalaimide. Functionally, catalyzes the hydrolysis of beta-1,3-xylan into oligosaccharides, mainly xylotriose and xylobiose with smaller amounts of xylotetraose, xylose, xylopentaose and xylohexaose. Weakly active toward beta-1,3-xylotriose, yielding xylose and xylobiose. Converts beta-1,3-xylotetraose into xylotriose, xylobiose and xylose. Converts beta-1,3-xylopentaose into xylotetraose, xylotriose, xylobiose and xylose. Does not hydrolyze xylobiose, p-nitrophenyl-beta-xyloside, beta-1,4-xylan, curdlan or carboxymethylcellulose. The sequence is that of Beta-1,3-xylanase TXYA from Vibrio sp.